The chain runs to 487 residues: MDEDLVLALQLQEEWNLQVSEREPAQEPLSLVDASWELVDPTPDLQGLFVLFNDRFFWGQLEAVEVKWSVRMTLCAGICSYEGRGGMCSIRLSEPLLKLRPRKDLVETLLHEMIHAYLFVTNNDKDREGHGPEFCKHMHRINRLTGANITVYHTFHDEVDEYRRHWWRCNGPCQNSKPYYGYVKRATNRAPSAHDYWWAEHQKTCGGTYIKIKEPENYSKKGKGKTKLRKQPVSEAENKDKPNRGEKQLLIPFTGKGYVLGETSNFSSGKCITSHAINESQEPLSQDHSANALRPHSKTEVKFEQNGPSKKTSVASPVLSTSHQNVLSNYFSKVSVASSKAFRSVSGSPVKSLTVGDSTTKSVSAGSQRRVTSSRTSLRNSLKAMESTYVTVPQDAGGPEGKLPSKRPRIEDKTFFDLFFIKKEQAQSGGGDVTSSSHPPAAAQSPSGASGQSRVVHCPVCQDEVSETQINEHLDWCLERDSTQVKS.

At Met-1 the chain carries N-acetylmethionine. The region spanning 45 to 212 is the SprT-like domain; sequence LQGLFVLFND…KTCGGTYIKI (168 aa). Zn(2+) is bound at residue His-111. Residue Glu-112 is part of the active site. Zn(2+) contacts are provided by His-115 and His-130. A disordered region spans residues 219–248; the sequence is SKKGKGKTKLRKQPVSEAENKDKPNRGEKQ. Basic residues predominate over residues 220–230; the sequence is KKGKGKTKLRK. Lys-230 is subject to N6-acetyllysine. The span at 236-247 shows a compositional bias: basic and acidic residues; the sequence is AENKDKPNRGEK. Positions 253 to 261 match the SHP-box motif; sequence FTGKGYVLG. At Ser-267 the chain carries Phosphoserine. Over residues 280-289 the composition is skewed to polar residues; the sequence is SQEPLSQDHS. Positions 280–317 are disordered; that stretch reads SQEPLSQDHSANALRPHSKTEVKFEQNGPSKKTSVASP. Residue Lys-302 forms a Glycyl lysine isopeptide (Lys-Gly) (interchain with G-Cter in SUMO2) linkage. Residues 306–317 show a composition bias toward polar residues; that stretch reads NGPSKKTSVASP. The PIP-box signature appears at 324-331; that stretch reads QNVLSNYF. A Glycyl lysine isopeptide (Lys-Gly) (interchain with G-Cter in SUMO2); alternate cross-link involves residue Lys-340. Lys-340 is covalently cross-linked (Glycyl lysine isopeptide (Lys-Gly) (interchain with G-Cter in ubiquitin); alternate). Positions 347–379 are disordered; sequence GSPVKSLTVGDSTTKSVSAGSQRRVTSSRTSLR. A Phosphoserine modification is found at Ser-373. A Nuclear localization signal motif is present at residues 401-412; it reads GKLPSKRPRIED. Lys-413 participates in a covalent cross-link: Glycyl lysine isopeptide (Lys-Gly) (interchain with G-Cter in ubiquitin). Glycyl lysine isopeptide (Lys-Gly) (interchain with G-Cter in SUMO2) cross-links involve residues Lys-422 and Lys-423. Residues 427–455 are disordered; sequence QSGGGDVTSSSHPPAAAQSPSGASGQSRV. The span at 435–453 shows a compositional bias: low complexity; it reads SSSHPPAAAQSPSGASGQS. A UBZ4-type zinc finger spans residues 455–482; that stretch reads VVHCPVCQDEVSETQINEHLDWCLERDS. Zn(2+)-binding residues include Cys-458, Cys-461, His-473, and Cys-477. Residue Lys-486 forms a Glycyl lysine isopeptide (Lys-Gly) (interchain with G-Cter in SUMO2) linkage.

The protein belongs to the Spartan family. As to quaternary structure, homodimer. Interacts (VIA PIP-box) with PCNA (when ubiquitinated). Interacts (via its SHP-box) with VCP/p97. Interacts with RAD18. Interacts with KCTD13 and POLD3. Zn(2+) is required as a cofactor. Post-translationally, autocatalytically cleaved in response to double-stranded DNA-binding: autocatalytic cleavage takes place in trans and leads to inactivation. Monoubiquitinated; monoubiquitination promotes exclusion from chromatin. Deubiquitinated by VCPIP1: deubiquitination is required for subsequent acetylation and recruitment to chromatin and DNA damage sites. In terms of processing, acetylated following deubiquitination by VCPIP1, leading to recruitment to chromatin and DNA damage sites. Post-translationally, phosphorylation by CHEK1 promotes recruitment to chromatin.

It localises to the nucleus. It is found in the chromosome. Its activity is regulated as follows. DNA-binding activates the protease activity: single-stranded DNA-binding specifically activates ability to cleave covalent DNA-protein cross-links (DPCs). In contrast, double-stranded DNA-binding specifically activates autocatalytic cleavage, and subsequent inactivation. Functionally, DNA-dependent metalloendopeptidase that mediates the proteolytic cleavage of covalent DNA-protein cross-links (DPCs) during DNA synthesis, thereby playing a key role in maintaining genomic integrity. DPCs are highly toxic DNA lesions that interfere with essential chromatin transactions, such as replication and transcription, and which are induced by reactive agents, such as UV light or formaldehyde. Associates with the DNA replication machinery and specifically removes DPCs during DNA synthesis. Catalyzes proteolytic cleavage of the HMCES DNA-protein cross-link following unfolding by the BRIP1/FANCJ helicase. Acts as a pleiotropic protease for DNA-binding proteins cross-linked with DNA, such as TOP1, TOP2A, histones H3 and H4. Mediates degradation of DPCs that are not ubiquitinated, while it is not able to degrade ubiquitinated DPCs. SPRTN activation requires polymerase collision with DPCs followed by helicase bypass of DPCs. Involved in recruitment of VCP/p97 to sites of DNA damage. Also acts as an activator of CHEK1 during normal DNA replication by mediating proteolytic cleavage of CHEK1, thereby promoting CHEK1 removal from chromatin and subsequent activation. Does not activate CHEK1 in response to DNA damage. May also act as a 'reader' of ubiquitinated PCNA: recruited to sites of UV damage and interacts with ubiquitinated PCNA and RAD18, the E3 ubiquitin ligase that monoubiquitinates PCNA. Facilitates chromatin association of RAD18 and is required for efficient PCNA monoubiquitination, promoting a feed-forward loop to enhance PCNA ubiquitination and translesion DNA synthesis. The chain is DNA-dependent metalloprotease SPRTN from Bos taurus (Bovine).